We begin with the raw amino-acid sequence, 387 residues long: N-acetyldiaminopimelate deacetylase (387 aa).

Aspartate 75 is a catalytic residue. Residue glutamate 134 is the Proton acceptor of the active site.

The protein belongs to the peptidase M20A family. N-acetyldiaminopimelate deacetylase subfamily.

It catalyses the reaction N-acetyl-(2S,6S)-2,6-diaminopimelate + H2O = (2S,6S)-2,6-diaminopimelate + acetate. The protein operates within amino-acid biosynthesis; L-lysine biosynthesis via DAP pathway; LL-2,6-diaminopimelate from (S)-tetrahydrodipicolinate (acetylase route): step 3/3. Catalyzes the conversion of N-acetyl-diaminopimelate to diaminopimelate and acetate. This chain is N-acetyldiaminopimelate deacetylase, found in Leuconostoc citreum (strain KM20).